The chain runs to 295 residues: Nucleotide-binding protein RD1_1380 (295 aa).

16 to 23 (GPSGAGRS) contacts ATP. GTP is bound at residue 63 to 66 (DPRN).

This sequence belongs to the RapZ-like family.

In terms of biological role, displays ATPase and GTPase activities. The sequence is that of Nucleotide-binding protein RD1_1380 from Roseobacter denitrificans (strain ATCC 33942 / OCh 114) (Erythrobacter sp. (strain OCh 114)).